A 348-amino-acid chain; its full sequence is Delta(6)-protoilludene synthase 18 (348 aa).

Asp87, Asn223, Ser227, and Glu231 together coordinate Mg(2+). A DDXXD motif motif is present at residues 87–91; the sequence is DEYTD. The short motif at 223–231 is the NSE/DTE motif element; it reads NDLVSYNRE. Residues Arg311 and Tyr312 each contribute to the (2E,6E)-farnesyl diphosphate site.

The protein belongs to the terpene synthase family. Mg(2+) is required as a cofactor.

The catalysed reaction is (2E,6E)-farnesyl diphosphate = Delta(6)-protoilludene + diphosphate. In terms of biological role, terpene cyclase that catalyzes the cyclization of farnesyl diphosphate (FPP) to delta(6)-protoilludene. The sequence is that of Delta(6)-protoilludene synthase 18 from Postia placenta (strain ATCC 44394 / Madison 698-R) (Brown rot fungus).